We begin with the raw amino-acid sequence, 108 residues long: Thioredoxin (108 aa).

Residues 2 to 108 (SEHIVNVTDA…QLAAFLDANI (107 aa)) form the Thioredoxin domain. Cys33 and Cys36 form a disulfide bridge.

Belongs to the thioredoxin family.

Its function is as follows. Participates in various redox reactions through the reversible oxidation of its active center dithiol to a disulfide and catalyzes dithiol-disulfide exchange reactions. The polypeptide is Thioredoxin (trxA) (Pseudomonas aeruginosa (strain ATCC 15692 / DSM 22644 / CIP 104116 / JCM 14847 / LMG 12228 / 1C / PRS 101 / PAO1)).